A 318-amino-acid chain; its full sequence is Transaldolase (318 aa).

Residue K132 is the Schiff-base intermediate with substrate of the active site.

This sequence belongs to the transaldolase family. Type 1 subfamily. In terms of assembly, homodimer.

It is found in the cytoplasm. It catalyses the reaction D-sedoheptulose 7-phosphate + D-glyceraldehyde 3-phosphate = D-erythrose 4-phosphate + beta-D-fructose 6-phosphate. Its pathway is carbohydrate degradation; pentose phosphate pathway; D-glyceraldehyde 3-phosphate and beta-D-fructose 6-phosphate from D-ribose 5-phosphate and D-xylulose 5-phosphate (non-oxidative stage): step 2/3. Functionally, transaldolase is important for the balance of metabolites in the pentose-phosphate pathway. This chain is Transaldolase, found in Shewanella sp. (strain ANA-3).